A 198-amino-acid polypeptide reads, in one-letter code: Nucleoid occlusion factor SlmA (198 aa).

Positions 10–70 (NRREEILQSL…SLIEFIEDSL (61 aa)) constitute an HTH tetR-type domain. The H-T-H motif DNA-binding region spans 33 to 52 (TTAKLAASVGVSEAALYRHF). Residues 119–144 (DRLQGRINQLFERIEVQLRQVMREKK) are a coiled coil.

The protein belongs to the nucleoid occlusion factor SlmA family. As to quaternary structure, homodimer. Interacts with FtsZ.

Its subcellular location is the cytoplasm. It is found in the nucleoid. In terms of biological role, required for nucleoid occlusion (NO) phenomenon, which prevents Z-ring formation and cell division over the nucleoid. Acts as a DNA-associated cell division inhibitor that binds simultaneously chromosomal DNA and FtsZ, and disrupts the assembly of FtsZ polymers. SlmA-DNA-binding sequences (SBS) are dispersed on non-Ter regions of the chromosome, preventing FtsZ polymerization at these regions. This Klebsiella pneumoniae (strain 342) protein is Nucleoid occlusion factor SlmA.